We begin with the raw amino-acid sequence, 318 residues long: MFMINILMLIIPILLAVAFLTLVERKVLGYMQLRKGPNVVGPYGLLQPIADAIKLFIKEPLRPATSSASMFILAPIMALGLALTMWIPLPMPYPLINMNLGVLFMLAMSSLAVYSILWSGWASNSKYALIGALRAVAQTISYEVTLAIILLSVLLMSGSFTLSTLIITQEQMWLILPAWPLAMMWFISTLAETNRAPFDLTEGESELVSGFNVEYAAGPFALFFMAEYANIIMMNIFTAILFLGTSHNPHMPELYTINFTIKSLLLTMSFLWIRASYPRFRYDQLMHLLWKNFLPLTLALCMWHVSLPILTSGIPPQT.

The next 8 helical transmembrane spans lie at 2 to 22 (FMINILMLIIPILLAVAFLTL), 70 to 90 (MFILAPIMALGLALTMWIPLP), 100 to 120 (LGVLFMLAMSSLAVYSILWSG), 147 to 167 (AIILLSVLLMSGSFTLSTLII), 172 to 192 (MWLILPAWPLAMMWFISTLAE), 222 to 242 (LFFMAEYANIIMMNIFTAILF), 253 to 273 (ELYTINFTIKSLLLTMSFLWI), and 294 to 314 (LPLTLALCMWHVSLPILTSGI).

It belongs to the complex I subunit 1 family. As to quaternary structure, core subunit of respiratory chain NADH dehydrogenase (Complex I) which is composed of 45 different subunits.

Its subcellular location is the mitochondrion inner membrane. The catalysed reaction is a ubiquinone + NADH + 5 H(+)(in) = a ubiquinol + NAD(+) + 4 H(+)(out). Functionally, core subunit of the mitochondrial membrane respiratory chain NADH dehydrogenase (Complex I) which catalyzes electron transfer from NADH through the respiratory chain, using ubiquinone as an electron acceptor. Essential for the catalytic activity and assembly of complex I. The polypeptide is NADH-ubiquinone oxidoreductase chain 1 (MT-ND1) (Bos indicus (Zebu)).